We begin with the raw amino-acid sequence, 61 residues long: UPF0434 protein PST_2635 (61 aa).

Belongs to the UPF0434 family.

In Stutzerimonas stutzeri (strain A1501) (Pseudomonas stutzeri), this protein is UPF0434 protein PST_2635.